The primary structure comprises 246 residues: Probable transcriptional regulatory protein Pden_1905 (246 aa).

The segment at 1-21 is disordered; it reads MAGHSKWANIQHRKGKQDKLR.

Belongs to the TACO1 family.

It localises to the cytoplasm. This chain is Probable transcriptional regulatory protein Pden_1905, found in Paracoccus denitrificans (strain Pd 1222).